The sequence spans 65 residues: Weak neurotoxin 8 (65 aa).

Disulfide bonds link Cys3–Cys24, Cys6–Cys11, Cys17–Cys42, Cys46–Cys57, and Cys58–Cys63.

Belongs to the three-finger toxin family. Ancestral subfamily. Orphan group II sub-subfamily. Expressed by the venom gland.

The protein resides in the secreted. Its function is as follows. Binds with low affinity to muscular (alpha-1-beta-1-delta-epsilon/CHRNA1-CHRNB1-CHRND-CHRNE) and very low affinity to neuronal (alpha-7/CHRNA7) nicotinic acetylcholine receptor (nAChR). The sequence is that of Weak neurotoxin 8 from Naja naja (Indian cobra).